Reading from the N-terminus, the 87-residue chain is Small ribosomal subunit protein bS20 (87 aa).

The tract at residues 1–20 is disordered; the sequence is MANIKSQIKRNKTNEKARLR.

It belongs to the bacterial ribosomal protein bS20 family.

In terms of biological role, binds directly to 16S ribosomal RNA. The protein is Small ribosomal subunit protein bS20 of Corynebacterium efficiens (strain DSM 44549 / YS-314 / AJ 12310 / JCM 11189 / NBRC 100395).